A 557-amino-acid chain; its full sequence is Formate--tetrahydrofolate ligase (557 aa).

65-72 (TPAGEGKT) contacts ATP.

The protein belongs to the formate--tetrahydrofolate ligase family.

It carries out the reaction (6S)-5,6,7,8-tetrahydrofolate + formate + ATP = (6R)-10-formyltetrahydrofolate + ADP + phosphate. It participates in one-carbon metabolism; tetrahydrofolate interconversion. This Methylorubrum populi (strain ATCC BAA-705 / NCIMB 13946 / BJ001) (Methylobacterium populi) protein is Formate--tetrahydrofolate ligase.